Consider the following 373-residue polypeptide: Indole glucosinolate O-methyltransferase 3 (373 aa).

Gly217, Asp240, Asp260, Met261, and Lys274 together coordinate S-adenosyl-L-homocysteine. His278 serves as the catalytic Proton acceptor.

The protein belongs to the class I-like SAM-binding methyltransferase superfamily. Cation-independent O-methyltransferase family.

It functions in the pathway secondary metabolite biosynthesis. Functionally, involved in indole glucosinolate biosynthesis. Catalyzes methoxylation reactions of the glucosinolate indole ring. Converts the hydroxy intermediates 4-hydroxy-indol-3-yl-methylglucosinolate (4OH-I3M) and 1-hydroxy-indol-3-yl-methylglucosinolate (1OH-I3M) to 4-methoxy-indol-3-yl-methylglucosinolate (4MO-I3M) and 1-methoxy-indol-3-yl-methylglucosinolate(1MO-I3M), respectively. The sequence is that of Indole glucosinolate O-methyltransferase 3 from Arabidopsis thaliana (Mouse-ear cress).